The following is a 124-amino-acid chain: Schlafen-like protein (124 aa).

It belongs to the Schlafen family. Subgroup poxviridae B3 subfamily.

This chain is Schlafen-like protein, found in Homo sapiens (Human).